Here is a 386-residue protein sequence, read N- to C-terminus: L-lactate dehydrogenase (386 aa).

The 380-residue stretch at 1 to 380 folds into the FMN hydroxy acid dehydrogenase domain; it reads MIISASTDYR…TSDSLVQVTQ (380 aa). Tyrosine 24 lines the substrate pocket. FMN is bound by residues serine 106 and glutamine 127. Tyrosine 129 serves as a coordination point for substrate. An FMN-binding site is contributed by threonine 155. Position 164 (arginine 164) interacts with substrate. Lysine 251 contacts FMN. Residue histidine 275 is the Proton acceptor of the active site. Arginine 278 lines the substrate pocket. Position 306-330 (306-330) interacts with FMN; sequence DSGIRSGLDVVRMIALGADGVMLGR.

It belongs to the FMN-dependent alpha-hydroxy acid dehydrogenase family. FMN serves as cofactor.

Its subcellular location is the cell inner membrane. The catalysed reaction is (S)-lactate + A = pyruvate + AH2. In terms of biological role, catalyzes the conversion of L-lactate to pyruvate. Is coupled to the respiratory chain. This chain is L-lactate dehydrogenase, found in Pectobacterium atrosepticum (strain SCRI 1043 / ATCC BAA-672) (Erwinia carotovora subsp. atroseptica).